The chain runs to 453 residues: MSETQQQVQNSTGSIRSPDKIEDTFRRMKVNEDNMEQSSPYPDRPGERDCQFFLRTGQCGYGNSCRYNHPLTNLPQGIIYYRDQLPERVGQPDCETGACKYGPTCKYHHPKDRNGAGPVLFNVLGLPMRQGEKPCPYYMQTGLCRFGVACKFHHPHPHSQPSNGHSAYAMSSFPSVGFPYASGMTMVSLPPATYGAIPRPQVPQSQAYMPYMVAPSQGLLPPQGWATYMTASNPIYNMKTQLDSSSSASVAVTVTSHHHSFSERAECRFFMNTGTCKYGDDCKYSHPKERLLQSPPTLLNPIVLPARPGQPACGNFKAYGFCKFGANCKFDHSMLLNPYNNTGLAMSSLPTPYPYAPPVSTNLRISSPPSPSDMTTLSNGKPAAAEAQSLETEKQDDSPTEPEKSEVEDSLPPNGSDSTSLPNDKPDAETEKQDDDSAELDSSKVQDSSDKST.

Residues 1–15 (MSETQQQVQNSTGSI) are compositionally biased toward polar residues. Residues 1–47 (MSETQQQVQNSTGSIRSPDKIEDTFRRMKVNEDNMEQSSPYPDRPGE) form a disordered region. An N-acetylserine modification is found at Ser2. A compositionally biased stretch (basic and acidic residues) spans 17-32 (SPDKIEDTFRRMKVNE). 5 consecutive C3H1-type zinc fingers follow at residues 44–72 (RPGERDCQFFLRTGQCGYGNSCRYNHPLT), 95–112 (ETGACKYGPTCKYHHPKD), 129–157 (RQGEKPCPYYMQTGLCRFGVACKFHHPHP), 261–289 (FSERAECRFFMNTGTCKYGDDCKYSHPKE), and 307–335 (RPGQPACGNFKAYGFCKFGANCKFDHSML). The segment covering 360 to 379 (STNLRISSPPSPSDMTTLSN) has biased composition (polar residues). The segment at 360-453 (STNLRISSPP…KVQDSSDKST (94 aa)) is disordered. Residues 391 to 407 (ETEKQDDSPTEPEKSEV) show a composition bias toward basic and acidic residues. Residues 413-422 (PNGSDSTSLP) show a composition bias toward polar residues. Over residues 441–453 (DSSKVQDSSDKST) the composition is skewed to basic and acidic residues.

Its subcellular location is the nucleus. This Arabidopsis thaliana (Mouse-ear cress) protein is Zinc finger CCCH domain-containing protein 26 (ZFN2).